The primary structure comprises 331 residues: Glyceraldehyde-3-phosphate dehydrogenase (331 aa).

NAD(+)-binding positions include Arg12 to Ile13, Asp34, Arg78, and Thr120. Residues Ser149 to Thr151, Thr180, Thr209 to Gly210, and Arg232 contribute to the D-glyceraldehyde 3-phosphate site. The active-site Nucleophile is the Cys150. Asn314 is a binding site for NAD(+).

It belongs to the glyceraldehyde-3-phosphate dehydrogenase family. In terms of assembly, homotetramer.

It is found in the cytoplasm. It catalyses the reaction D-glyceraldehyde 3-phosphate + phosphate + NAD(+) = (2R)-3-phospho-glyceroyl phosphate + NADH + H(+). It functions in the pathway carbohydrate degradation; glycolysis; pyruvate from D-glyceraldehyde 3-phosphate: step 1/5. Its function is as follows. Catalyzes the oxidative phosphorylation of glyceraldehyde 3-phosphate (G3P) to 1,3-bisphosphoglycerate (BPG) using the cofactor NAD. The first reaction step involves the formation of a hemiacetal intermediate between G3P and a cysteine residue, and this hemiacetal intermediate is then oxidized to a thioester, with concomitant reduction of NAD to NADH. The reduced NADH is then exchanged with the second NAD, and the thioester is attacked by a nucleophilic inorganic phosphate to produce BPG. The chain is Glyceraldehyde-3-phosphate dehydrogenase (gapA) from Escherichia fergusonii (strain ATCC 35469 / DSM 13698 / CCUG 18766 / IAM 14443 / JCM 21226 / LMG 7866 / NBRC 102419 / NCTC 12128 / CDC 0568-73).